The following is a 341-amino-acid chain: tRNA N6-adenosine threonylcarbamoyltransferase (341 aa).

Positions 111 and 115 each coordinate Fe cation. Residues 134–138, aspartate 167, glycine 180, and asparagine 276 each bind substrate; that span reads LVSGG. Position 304 (aspartate 304) interacts with Fe cation.

This sequence belongs to the KAE1 / TsaD family. Fe(2+) is required as a cofactor.

The protein localises to the cytoplasm. The enzyme catalyses L-threonylcarbamoyladenylate + adenosine(37) in tRNA = N(6)-L-threonylcarbamoyladenosine(37) in tRNA + AMP + H(+). Its function is as follows. Required for the formation of a threonylcarbamoyl group on adenosine at position 37 (t(6)A37) in tRNAs that read codons beginning with adenine. Is involved in the transfer of the threonylcarbamoyl moiety of threonylcarbamoyl-AMP (TC-AMP) to the N6 group of A37, together with TsaE and TsaB. TsaD likely plays a direct catalytic role in this reaction. The polypeptide is tRNA N6-adenosine threonylcarbamoyltransferase (Pseudomonas fluorescens (strain SBW25)).